Here is an 865-residue protein sequence, read N- to C-terminus: Bifunctional uridylyltransferase/uridylyl-removing enzyme (865 aa).

Residues 1–318 (MPHVDLNPLK…FPRPDSDARL (318 aa)) are uridylyltransferase. The tract at residues 319-675 (IDDDFRNLRE…VRPTEHGEGL (357 aa)) is uridylyl-removing. The HD domain maps to 437–559 (VDQHTLAVVR…VGDERRLAAL (123 aa)). 2 ACT domains span residues 676–762 (QVMV…RLPH) and 789–865 (RLSV…QQAA). A disordered region spans residues 747 to 767 (DPHAARHAHAPRRLPHSHARR). The segment covering 751-767 (ARHAHAPRRLPHSHARR) has biased composition (basic residues).

Belongs to the GlnD family. Mg(2+) serves as cofactor.

The enzyme catalyses [protein-PII]-L-tyrosine + UTP = [protein-PII]-uridylyl-L-tyrosine + diphosphate. It carries out the reaction [protein-PII]-uridylyl-L-tyrosine + H2O = [protein-PII]-L-tyrosine + UMP + H(+). Its activity is regulated as follows. Uridylyltransferase (UTase) activity is inhibited by glutamine, while glutamine activates uridylyl-removing (UR) activity. In terms of biological role, modifies, by uridylylation and deuridylylation, the PII regulatory proteins (GlnB and homologs), in response to the nitrogen status of the cell that GlnD senses through the glutamine level. Under low glutamine levels, catalyzes the conversion of the PII proteins and UTP to PII-UMP and PPi, while under higher glutamine levels, GlnD hydrolyzes PII-UMP to PII and UMP (deuridylylation). Thus, controls uridylylation state and activity of the PII proteins, and plays an important role in the regulation of nitrogen assimilation and metabolism. The protein is Bifunctional uridylyltransferase/uridylyl-removing enzyme of Bordetella pertussis (strain Tohama I / ATCC BAA-589 / NCTC 13251).